Reading from the N-terminus, the 444-residue chain is Tol-Pal system protein TolB (444 aa).

The N-terminal stretch at 1–19 (MRNIIYFILSLLFSVTSYA) is a signal peptide.

The protein belongs to the TolB family. In terms of assembly, the Tol-Pal system is composed of five core proteins: the inner membrane proteins TolA, TolQ and TolR, the periplasmic protein TolB and the outer membrane protein Pal. They form a network linking the inner and outer membranes and the peptidoglycan layer.

The protein localises to the periplasm. Its function is as follows. Part of the Tol-Pal system, which plays a role in outer membrane invagination during cell division and is important for maintaining outer membrane integrity. The polypeptide is Tol-Pal system protein TolB (Rickettsia rickettsii (strain Sheila Smith)).